The sequence spans 555 residues: Sulfite reductase [ferredoxin] (555 aa).

Residues methionine 1–proline 22 are disordered. A cross-link (3'-(S-cysteinyl)-tyrosine (Tyr-Cys)) is located at residues tyrosine 69–cysteine 161. 4 residues coordinate [4Fe-4S] cluster: cysteine 417, cysteine 423, cysteine 463, and cysteine 467. Siroheme is bound at residue cysteine 467.

It belongs to the nitrite and sulfite reductase 4Fe-4S domain family. As to quaternary structure, monomer. Siroheme is required as a cofactor. [4Fe-4S] cluster serves as cofactor.

The catalysed reaction is hydrogen sulfide + 6 oxidized [2Fe-2S]-[ferredoxin] + 3 H2O = sulfite + 6 reduced [2Fe-2S]-[ferredoxin] + 7 H(+). Its function is as follows. Catalyzes the reduction of sulfite to sulfide, a step in the biosynthesis of sulfur-containing amino acids and cofactors. The protein is Sulfite reductase [ferredoxin] (sir) of Mycobacterium bovis (strain ATCC BAA-935 / AF2122/97).